A 246-amino-acid polypeptide reads, in one-letter code: 1-(5-phosphoribosyl)-5-[(5-phosphoribosylamino)methylideneamino] imidazole-4-carboxamide isomerase (246 aa).

The Proton acceptor role is filled by aspartate 8. Aspartate 129 acts as the Proton donor in catalysis.

This sequence belongs to the HisA/HisF family.

The protein resides in the cytoplasm. The catalysed reaction is 1-(5-phospho-beta-D-ribosyl)-5-[(5-phospho-beta-D-ribosylamino)methylideneamino]imidazole-4-carboxamide = 5-[(5-phospho-1-deoxy-D-ribulos-1-ylimino)methylamino]-1-(5-phospho-beta-D-ribosyl)imidazole-4-carboxamide. It functions in the pathway amino-acid biosynthesis; L-histidine biosynthesis; L-histidine from 5-phospho-alpha-D-ribose 1-diphosphate: step 4/9. This is 1-(5-phosphoribosyl)-5-[(5-phosphoribosylamino)methylideneamino] imidazole-4-carboxamide isomerase from Desulforamulus reducens (strain ATCC BAA-1160 / DSM 100696 / MI-1) (Desulfotomaculum reducens).